The sequence spans 680 residues: DNA ligase (680 aa).

NAD(+)-binding positions include 44–48, 94–95, and E124; these read DYIYD and SL. The active-site N6-AMP-lysine intermediate is K126. NAD(+) is bound by residues R147, E181, K297, and K321. The Zn(2+) site is built by C415, C418, C433, and C438. Residues 598-680 enclose the BRCT domain; sequence DENSFFYGKK…VDEQVKEDGK (83 aa).

This sequence belongs to the NAD-dependent DNA ligase family. LigA subfamily. The cofactor is Mg(2+). Mn(2+) serves as cofactor.

It carries out the reaction NAD(+) + (deoxyribonucleotide)n-3'-hydroxyl + 5'-phospho-(deoxyribonucleotide)m = (deoxyribonucleotide)n+m + AMP + beta-nicotinamide D-nucleotide.. DNA ligase that catalyzes the formation of phosphodiester linkages between 5'-phosphoryl and 3'-hydroxyl groups in double-stranded DNA using NAD as a coenzyme and as the energy source for the reaction. It is essential for DNA replication and repair of damaged DNA. In Leuconostoc mesenteroides subsp. mesenteroides (strain ATCC 8293 / DSM 20343 / BCRC 11652 / CCM 1803 / JCM 6124 / NCDO 523 / NBRC 100496 / NCIMB 8023 / NCTC 12954 / NRRL B-1118 / 37Y), this protein is DNA ligase.